Reading from the N-terminus, the 444-residue chain is ATP-dependent protease ATPase subunit HslU (444 aa).

Residues I20 and 62–67 (GVGKTE) each bind ATP. The tract at residues 130–158 (EDRILDALVPPPRGASGEPERGEDNSARQ) is disordered. Residues D257, E322, and R394 each contribute to the ATP site.

Belongs to the ClpX chaperone family. HslU subfamily. In terms of assembly, a double ring-shaped homohexamer of HslV is capped on each side by a ring-shaped HslU homohexamer. The assembly of the HslU/HslV complex is dependent on binding of ATP.

The protein resides in the cytoplasm. ATPase subunit of a proteasome-like degradation complex; this subunit has chaperone activity. The binding of ATP and its subsequent hydrolysis by HslU are essential for unfolding of protein substrates subsequently hydrolyzed by HslV. HslU recognizes the N-terminal part of its protein substrates and unfolds these before they are guided to HslV for hydrolysis. The chain is ATP-dependent protease ATPase subunit HslU from Bordetella pertussis (strain Tohama I / ATCC BAA-589 / NCTC 13251).